A 212-amino-acid chain; its full sequence is MFITFEGIEGSGKSTALARLKDWLQEHGHGATLTREPGGSRLGGILRSILLDIGNDDLTGETELFLYLADRSQHVHQVIRPALAEGVAVISDRYADSTVVYQGYGRGLDPALLHRLNDVAVRGLWPDLTLLFDLEPEIGLKRATTRNLREGTGATEGRFEAESLAFHTRVREGYLTWAALNKERFRIIDAAASPDEVFEQVRSAVADVFTIG.

7-14 (GIEGSGKS) contacts ATP.

It belongs to the thymidylate kinase family.

The enzyme catalyses dTMP + ATP = dTDP + ADP. Functionally, phosphorylation of dTMP to form dTDP in both de novo and salvage pathways of dTTP synthesis. The sequence is that of Thymidylate kinase from Oleidesulfovibrio alaskensis (strain ATCC BAA-1058 / DSM 17464 / G20) (Desulfovibrio alaskensis).